Reading from the N-terminus, the 434-residue chain is Serine hydroxymethyltransferase (434 aa).

(6S)-5,6,7,8-tetrahydrofolate contacts are provided by residues Leu-132 and 136 to 138; that span reads GHL. An N6-(pyridoxal phosphate)lysine modification is found at Lys-241.

This sequence belongs to the SHMT family. Homodimer. The cofactor is pyridoxal 5'-phosphate.

Its subcellular location is the cytoplasm. The enzyme catalyses (6R)-5,10-methylene-5,6,7,8-tetrahydrofolate + glycine + H2O = (6S)-5,6,7,8-tetrahydrofolate + L-serine. The protein operates within one-carbon metabolism; tetrahydrofolate interconversion. It participates in amino-acid biosynthesis; glycine biosynthesis; glycine from L-serine: step 1/1. Catalyzes the reversible interconversion of serine and glycine with tetrahydrofolate (THF) serving as the one-carbon carrier. This reaction serves as the major source of one-carbon groups required for the biosynthesis of purines, thymidylate, methionine, and other important biomolecules. Also exhibits THF-independent aldolase activity toward beta-hydroxyamino acids, producing glycine and aldehydes, via a retro-aldol mechanism. This Nitrobacter hamburgensis (strain DSM 10229 / NCIMB 13809 / X14) protein is Serine hydroxymethyltransferase.